A 771-amino-acid chain; its full sequence is ATP-dependent DNA helicase UvrD1 (771 aa).

The tract at residues 1-21 (MSVHATDAKPPGPSPADQLLD) is disordered. Positions 21–311 (DGLNPQQRQA…ILLEQNYRST (291 aa)) constitute a UvrD-like helicase ATP-binding domain. Residues 45 to 50 (GSGKTA) and R309 each bind ATP. The UvrD-like helicase C-terminal domain maps to 312–603 (QNILSAANSV…TLMTLHTAKG (292 aa)). The interval 691 to 716 (FSAPVSGAGRFGSARPSPTRSGASRR) is disordered.

Belongs to the helicase family. UvrD subfamily. Monomer. It depends on Mg(2+) as a cofactor.

It carries out the reaction Couples ATP hydrolysis with the unwinding of duplex DNA by translocating in the 3'-5' direction.. The catalysed reaction is ATP + H2O = ADP + phosphate + H(+). DNA-dependent ATPase, acting on dsDNA with a 3'-ssDNA tail, unwinding with 3'-to 5'-polarity. Also highly efficient on nicked DNA. Involved in the post-incision events of nucleotide excision repair. The polypeptide is ATP-dependent DNA helicase UvrD1 (uvrD1) (Mycobacterium bovis (strain ATCC BAA-935 / AF2122/97)).